Consider the following 504-residue polypeptide: Maturase K (504 aa).

The protein belongs to the intron maturase 2 family. MatK subfamily.

The protein resides in the plastid. It localises to the chloroplast. Its function is as follows. Usually encoded in the trnK tRNA gene intron. Probably assists in splicing its own and other chloroplast group II introns. The polypeptide is Maturase K (Quercus coccifera (Kermes oak)).